The following is a 391-amino-acid chain: 2,4,6-trihydroxybenzophenone synthase (391 aa).

Cysteine 165 is an active-site residue.

It belongs to the thiolase-like superfamily. Chalcone/stilbene synthases family. In terms of assembly, homodimer. Expressed in young fruit pericarp.

The enzyme catalyses benzoyl-CoA + 3 malonyl-CoA + 2 H(+) = 2,4,6-trihydroxybenzophenone + 3 CO2 + 4 CoA. Functionally, type III polyketide synthase involved in the biosynthesis of benzophenones and xanthones. Produces mainly 2,4,6-trihydroxybenzophenone together with minor amounts of tetraketide lactone, triketide lactone and diketide lactone. The preferred substrate is benzoyl-CoA, but can also use acetyl-CoA, phenylacetyl-CoA, hexanoyl-CoA, cinnamoyl-CoA, p-coumaroyl-CoA and salicoyl-CoA. The protein is 2,4,6-trihydroxybenzophenone synthase (BPS) of Garcinia mangostana (Mangosteen).